The primary structure comprises 192 residues: Fe/S biogenesis protein NfuA (192 aa).

[4Fe-4S] cluster is bound by residues Cys149 and Cys152.

The protein belongs to the NfuA family. Homodimer. The cofactor is [4Fe-4S] cluster.

In terms of biological role, involved in iron-sulfur cluster biogenesis. Binds a 4Fe-4S cluster, can transfer this cluster to apoproteins, and thereby intervenes in the maturation of Fe/S proteins. Could also act as a scaffold/chaperone for damaged Fe/S proteins. The chain is Fe/S biogenesis protein NfuA from Pseudoalteromonas atlantica (strain T6c / ATCC BAA-1087).